Reading from the N-terminus, the 180-residue chain is MEAVRFAVAVVLVFCYVTSSNAQMTSPPSGGAGGDAHSLPCIQKLMPCQPYLHLATPPPATCCMPLNEIVAKDATCLCAVFNNVDMLKSLNLTKENALDLPKACGAKADVSLCKTSAGTNSSSTPPATPKTPPASSTSTGTGSGSTGNAAPSTAKPTSSAPAINFGGLSFASAVVATLFF.

An N-terminal signal peptide occupies residues M1 to A22. 4 cysteine pairs are disulfide-bonded: C41/C78, C48/C62, C63/C104, and C76/C113. Residues N91 and N120 are each glycosylated (N-linked (GlcNAc...) asparagine). 2 stretches are compositionally biased toward low complexity: residues S116 to P125 and P133 to P156. Residues S116–P156 form a disordered region. S158 carries GPI-anchor amidated serine lipidation. A propeptide spans S159–F180 (removed in mature form).

The protein belongs to the plant LTP family. Restricted to stamen, pollen and sporophytic tissues. Also detected, at low levels, in stems and leaves.

Its subcellular location is the cell membrane. Lipid transfer protein involved in seed and ovule maturation and development, probably by regulating the fatty acids homeostasis during suberin and sporopollenin biosynthesis or deposition. This is Non-specific lipid transfer protein GPI-anchored 3 from Arabidopsis thaliana (Mouse-ear cress).